A 154-amino-acid chain; its full sequence is SsrA-binding protein (154 aa).

Belongs to the SmpB family.

The protein resides in the cytoplasm. Required for rescue of stalled ribosomes mediated by trans-translation. Binds to transfer-messenger RNA (tmRNA), required for stable association of tmRNA with ribosomes. tmRNA and SmpB together mimic tRNA shape, replacing the anticodon stem-loop with SmpB. tmRNA is encoded by the ssrA gene; the 2 termini fold to resemble tRNA(Ala) and it encodes a 'tag peptide', a short internal open reading frame. During trans-translation Ala-aminoacylated tmRNA acts like a tRNA, entering the A-site of stalled ribosomes, displacing the stalled mRNA. The ribosome then switches to translate the ORF on the tmRNA; the nascent peptide is terminated with the 'tag peptide' encoded by the tmRNA and targeted for degradation. The ribosome is freed to recommence translation, which seems to be the essential function of trans-translation. In Staphylococcus saprophyticus subsp. saprophyticus (strain ATCC 15305 / DSM 20229 / NCIMB 8711 / NCTC 7292 / S-41), this protein is SsrA-binding protein.